Consider the following 171-residue polypeptide: Methyl-coenzyme M reductase operon protein D (171 aa).

In terms of assembly, MCR is composed of three subunits: alpha, beta, and gamma. The function of proteins C and D is not known.

The sequence is that of Methyl-coenzyme M reductase operon protein D (mcrD) from Methanosarcina barkeri (strain Fusaro / DSM 804).